A 552-amino-acid chain; its full sequence is Urocanate hydratase (552 aa).

NAD(+) contacts are provided by residues 48–49, Gln-126, 172–174, Glu-192, Arg-197, 238–239, 259–263, 269–270, and Tyr-318; these read GG, GMG, NA, QTSAH, and YV. The active site involves Cys-406. Residue Gly-488 coordinates NAD(+).

Belongs to the urocanase family. It depends on NAD(+) as a cofactor.

It is found in the cytoplasm. It catalyses the reaction 4-imidazolone-5-propanoate = trans-urocanate + H2O. It participates in amino-acid degradation; L-histidine degradation into L-glutamate; N-formimidoyl-L-glutamate from L-histidine: step 2/3. Catalyzes the conversion of urocanate to 4-imidazolone-5-propionate. The protein is Urocanate hydratase of Herpetosiphon aurantiacus (strain ATCC 23779 / DSM 785 / 114-95).